Here is a 167-residue protein sequence, read N- to C-terminus: uncharacterized protein (167 aa).

Its subcellular location is the mitochondrion. This is an uncharacterized protein from Marchantia polymorpha (Common liverwort).